We begin with the raw amino-acid sequence, 157 residues long: Arginine repressor (157 aa).

Belongs to the ArgR family.

The protein resides in the cytoplasm. Its pathway is amino-acid biosynthesis; L-arginine biosynthesis [regulation]. In terms of biological role, regulates arginine biosynthesis genes. This chain is Arginine repressor, found in Bacteroides thetaiotaomicron (strain ATCC 29148 / DSM 2079 / JCM 5827 / CCUG 10774 / NCTC 10582 / VPI-5482 / E50).